We begin with the raw amino-acid sequence, 441 residues long: Ribosomal protein uS12 methylthiotransferase RimO (441 aa).

An MTTase N-terminal domain is found at 8 to 118; sequence PKIGFVSLGC…VLQHVHHYVP (111 aa). The [4Fe-4S] cluster site is built by C17, C53, C82, C150, C154, and C157. Residues 136-373 form the Radical SAM core domain; it reads LTPRHYAYLK…MALQQQISAE (238 aa). In terms of domain architecture, TRAM spans 376-441; sequence QEKVGREILV…DEYDLWGSLV (66 aa).

Belongs to the methylthiotransferase family. RimO subfamily. [4Fe-4S] cluster is required as a cofactor.

It localises to the cytoplasm. It catalyses the reaction L-aspartate(89)-[ribosomal protein uS12]-hydrogen + (sulfur carrier)-SH + AH2 + 2 S-adenosyl-L-methionine = 3-methylsulfanyl-L-aspartate(89)-[ribosomal protein uS12]-hydrogen + (sulfur carrier)-H + 5'-deoxyadenosine + L-methionine + A + S-adenosyl-L-homocysteine + 2 H(+). Functionally, catalyzes the methylthiolation of an aspartic acid residue of ribosomal protein uS12. This Cronobacter sakazakii (strain ATCC BAA-894) (Enterobacter sakazakii) protein is Ribosomal protein uS12 methylthiotransferase RimO.